Consider the following 356-residue polypeptide: tRNA N6-adenosine threonylcarbamoyltransferase (356 aa).

His-116 and His-120 together coordinate Fe cation. Substrate-binding positions include 139 to 143, Asp-174, Gly-187, Asp-191, and Asn-281; that span reads IVSGG. Asp-309 provides a ligand contact to Fe cation.

Belongs to the KAE1 / TsaD family. It depends on Fe(2+) as a cofactor.

The protein localises to the cytoplasm. The catalysed reaction is L-threonylcarbamoyladenylate + adenosine(37) in tRNA = N(6)-L-threonylcarbamoyladenosine(37) in tRNA + AMP + H(+). Functionally, required for the formation of a threonylcarbamoyl group on adenosine at position 37 (t(6)A37) in tRNAs that read codons beginning with adenine. Is involved in the transfer of the threonylcarbamoyl moiety of threonylcarbamoyl-AMP (TC-AMP) to the N6 group of A37, together with TsaE and TsaB. TsaD likely plays a direct catalytic role in this reaction. The chain is tRNA N6-adenosine threonylcarbamoyltransferase from Frankia alni (strain DSM 45986 / CECT 9034 / ACN14a).